Consider the following 469-residue polypeptide: Phosphoenolpyruvate carboxylase (469 aa).

Belongs to the PEPCase type 2 family. As to quaternary structure, homotetramer. Requires Mg(2+) as cofactor.

The enzyme catalyses oxaloacetate + phosphate = phosphoenolpyruvate + hydrogencarbonate. Functionally, catalyzes the irreversible beta-carboxylation of phosphoenolpyruvate (PEP) to form oxaloacetate (OAA), a four-carbon dicarboxylic acid source for the tricarboxylic acid cycle. In Pyrococcus horikoshii (strain ATCC 700860 / DSM 12428 / JCM 9974 / NBRC 100139 / OT-3), this protein is Phosphoenolpyruvate carboxylase.